Consider the following 231-residue polypeptide: Flagellar L-ring protein (231 aa).

The signal sequence occupies residues 1-18 (MNRLLSVFALGGAVLLAG). Cys-19 carries the N-palmitoyl cysteine lipid modification. Cys-19 carries the S-diacylglycerol cysteine lipid modification.

The protein belongs to the FlgH family. As to quaternary structure, the basal body constitutes a major portion of the flagellar organelle and consists of four rings (L,P,S, and M) mounted on a central rod.

It is found in the cell outer membrane. It localises to the bacterial flagellum basal body. Assembles around the rod to form the L-ring and probably protects the motor/basal body from shearing forces during rotation. In Pseudomonas putida (strain ATCC 700007 / DSM 6899 / JCM 31910 / BCRC 17059 / LMG 24140 / F1), this protein is Flagellar L-ring protein.